The chain runs to 158 residues: 2-C-methyl-D-erythritol 2,4-cyclodiphosphate synthase (158 aa).

2 residues coordinate a divalent metal cation: aspartate 9 and histidine 11. 4-CDP-2-C-methyl-D-erythritol 2-phosphate contacts are provided by residues 9 to 11 (DVH) and 35 to 36 (HS). Histidine 43 contributes to the a divalent metal cation binding site. 4-CDP-2-C-methyl-D-erythritol 2-phosphate contacts are provided by residues 57–59 (DIG), 62–66 (FPDTD), 133–136 (TTTE), phenylalanine 140, and arginine 143.

It belongs to the IspF family. In terms of assembly, homotrimer. A divalent metal cation serves as cofactor.

The catalysed reaction is 4-CDP-2-C-methyl-D-erythritol 2-phosphate = 2-C-methyl-D-erythritol 2,4-cyclic diphosphate + CMP. It participates in isoprenoid biosynthesis; isopentenyl diphosphate biosynthesis via DXP pathway; isopentenyl diphosphate from 1-deoxy-D-xylulose 5-phosphate: step 4/6. Involved in the biosynthesis of isopentenyl diphosphate (IPP) and dimethylallyl diphosphate (DMAPP), two major building blocks of isoprenoid compounds. Catalyzes the conversion of 4-diphosphocytidyl-2-C-methyl-D-erythritol 2-phosphate (CDP-ME2P) to 2-C-methyl-D-erythritol 2,4-cyclodiphosphate (ME-CPP) with a corresponding release of cytidine 5-monophosphate (CMP). The sequence is that of 2-C-methyl-D-erythritol 2,4-cyclodiphosphate synthase from Actinobacillus pleuropneumoniae serotype 5b (strain L20).